We begin with the raw amino-acid sequence, 413 residues long: MFNFNASRWTRAQAMKVNKFDLTTSMPEIGTDFPIMRDDLWLWDTWPLRDINGNPVSFKGWNVIFSLVADRNIPWNDRHSHARIGYFYSKDGKSWVYGGHLLQESANTRTAEWSGGTIMAPGSRNQVETFFTSTLFDKNGVREAVAAVTKGRIYADSEGVWFKGFDQSTDLFQADGLFYQNYAENNLWNFRDPHVFINPEDGETYALFEANVATVRGEDDIGEDEIGPVPANTVVPKDANLCSASIGIARCLSPDRTEWELLPPLLTAFGVNDQMERPHVIFQNGLTYLFTISHDSTYADGLTGSDGLYGFVSENGIFGPYEPLNGSGLVLGGPASQPTEAYAHYIMNNGLVESFINEIIDPKSGKVIAGGSLAPTVRVELQGHETFATEVFDYGYIPASYAWPVWPFPDRRK.

Residue aspartate 44 is the Nucleophile of the active site. The active-site Proton donor/acceptor is glutamate 276.

It belongs to the glycosyl hydrolase 68 family.

Its subcellular location is the secreted. The catalysed reaction is Hydrolysis of terminal non-reducing beta-D-fructofuranoside residues in beta-D-fructofuranosides.. The polypeptide is Extracellular sucrase (sacC) (Zymomonas mobilis subsp. mobilis (strain ATCC 10988 / DSM 424 / LMG 404 / NCIMB 8938 / NRRL B-806 / ZM1)).